Here is a 269-residue protein sequence, read N- to C-terminus: SF-assemblin (269 aa).

The disordered stretch occupies residues 1–23 (MSISPGRSFSPMRASGLTGITSA). A nonhelical region region spans residues 1-24 (MSISPGRSFSPMRASGLTGITSAG). The segment at 25–269 (PTAKLEHVSE…LQEGLKLVST (245 aa)) is rod. A coiled-coil region spans residues 98 to 144 (AERSAAQHVDMQNSLKQAVDSLSNRLQDLHSLVREEREQRRNDIEHL).

The protein belongs to the SF-assemblin family.

It is found in the cytoplasm. It localises to the cytoskeleton. In terms of biological role, major component of the striated microtubule-associated fibers (SMAFs; system-I-fibers). In Chlamydomonas moewusii (Chlamydomonas eugametos), this protein is SF-assemblin.